The chain runs to 303 residues: Probable endonuclease 4 (303 aa).

His78, His118, Glu154, Asp188, His191, His222, Asp235, His237, and Glu267 together coordinate Zn(2+).

This sequence belongs to the AP endonuclease 2 family. It depends on Zn(2+) as a cofactor.

The enzyme catalyses Endonucleolytic cleavage to 5'-phosphooligonucleotide end-products.. In terms of biological role, endonuclease IV plays a role in DNA repair. It cleaves phosphodiester bonds at apurinic or apyrimidinic (AP) sites, generating a 3'-hydroxyl group and a 5'-terminal sugar phosphate. This chain is Probable endonuclease 4, found in Mycoplasmoides gallisepticum (strain R(low / passage 15 / clone 2)) (Mycoplasma gallisepticum).